The chain runs to 289 residues: Acetyl-coenzyme A carboxylase carboxyl transferase subunit beta (289 aa).

In terms of domain architecture, CoA carboxyltransferase N-terminal spans 34 to 289; that stretch reads MWVKCNKCGE…KLINMHQNSF (256 aa). Cys38, Cys41, Cys57, and Cys60 together coordinate Zn(2+). A C4-type zinc finger spans residues 38–60; it reads CNKCGEILYQNDLEKNYMVCNLC.

This sequence belongs to the AccD/PCCB family. As to quaternary structure, acetyl-CoA carboxylase is a heterohexamer composed of biotin carboxyl carrier protein (AccB), biotin carboxylase (AccC) and two subunits each of ACCase subunit alpha (AccA) and ACCase subunit beta (AccD). Zn(2+) is required as a cofactor.

The protein localises to the cytoplasm. The enzyme catalyses N(6)-carboxybiotinyl-L-lysyl-[protein] + acetyl-CoA = N(6)-biotinyl-L-lysyl-[protein] + malonyl-CoA. It functions in the pathway lipid metabolism; malonyl-CoA biosynthesis; malonyl-CoA from acetyl-CoA: step 1/1. Its function is as follows. Component of the acetyl coenzyme A carboxylase (ACC) complex. Biotin carboxylase (BC) catalyzes the carboxylation of biotin on its carrier protein (BCCP) and then the CO(2) group is transferred by the transcarboxylase to acetyl-CoA to form malonyl-CoA. The protein is Acetyl-coenzyme A carboxylase carboxyl transferase subunit beta of Clostridium botulinum (strain Okra / Type B1).